We begin with the raw amino-acid sequence, 341 residues long: Transcription factor ETV7 (341 aa).

Residues 33–117 (NLLGEGGICK…ELLQYIKTQR (85 aa)) enclose the PNT domain. The ETS DNA-binding region spans 224–305 (RLLWDYVYQL…PGQKLLFRFL (82 aa)). Positions 315 to 341 (KHSHLEPLESQEQDRIEFKDKRPEISP) are disordered.

It belongs to the ETS family. In terms of tissue distribution, expressed in hematopoietic tissues.

It localises to the nucleus. Functionally, transcriptional repressor; binds to the DNA sequence 5'-CCGGAAGT-3'. Isoform A does not seem to have a repressor activity. Isoform C does not seem to have a repressor activity. The polypeptide is Transcription factor ETV7 (ETV7) (Homo sapiens (Human)).